The following is a 251-amino-acid chain: Small ribosomal subunit protein uS2 (251 aa).

The interval 232-251 (EAIAEMDEQVEEDAEEASND) is disordered.

Belongs to the universal ribosomal protein uS2 family.

The sequence is that of Small ribosomal subunit protein uS2 from Chlorobaculum parvum (strain DSM 263 / NCIMB 8327) (Chlorobium vibrioforme subsp. thiosulfatophilum).